We begin with the raw amino-acid sequence, 496 residues long: Glycylpeptide N-tetradecanoyltransferase 1 (496 aa).

Positions 1-82 are disordered; it reads MADESETAVK…STQDQPVKMT (82 aa). S31 and S47 each carry phosphoserine. Residues 55–66 are compositionally biased toward basic residues; it reads KKKKKKQKKKKE. Position 83 is a phosphoserine (S83). Residues Q118, F119, W120, F247, L248, C249, V250, S256, R258, V259, and A260 each coordinate tetradecanoyl-CoA.

This sequence belongs to the NMT family. In terms of tissue distribution, ubiquitous.

The protein localises to the cytoplasm. The protein resides in the cytosol. Its subcellular location is the membrane. It catalyses the reaction N-terminal glycyl-[protein] + tetradecanoyl-CoA = N-tetradecanoylglycyl-[protein] + CoA + H(+). The catalysed reaction is N-terminal glycyl-L-lysyl-[protein] + tetradecanoyl-CoA = N-terminal glycyl-(N(6)-tetradecanoyl)-L-lysyl-[protein] + CoA + H(+). Functionally, adds a myristoyl group to the N-terminal glycine residue of certain cellular and viral proteins. Also able to mediate N-terminal lysine myristoylation of proteins: catalyzes myristoylation of ARF6 on both 'Gly-2' and 'Lys-3'. Lysine myristoylation is required to maintain ARF6 on membranes during the GTPase cycle. Required for normal embryogenesis. The polypeptide is Glycylpeptide N-tetradecanoyltransferase 1 (Mus musculus (Mouse)).